The sequence spans 84 residues: Large ribosomal subunit protein bL27 (84 aa).

The tract at residues M1–L21 is disordered.

The protein belongs to the bacterial ribosomal protein bL27 family.

The polypeptide is Large ribosomal subunit protein bL27 (Brachyspira hyodysenteriae (strain ATCC 49526 / WA1)).